Reading from the N-terminus, the 598-residue chain is Inactive metallocarboxypeptidase ECM14 (598 aa).

Positions 1-21 (MRLFTHGQVLALLAFVNTISA) are cleaved as a signal peptide. The propeptide occupies 22–174 (IPSFSTNSYP…QTIYESYPSP (153 aa)). The Peptidase M14 domain maps to 202–522 (NYQPLSVIVP…NAVMMLGRFL (321 aa)). Zn(2+)-binding residues include His264 and Glu267. Residues 264-267 (HARE), Arg322, and 339-340 (DR) contribute to the substrate site. Residues Cys333 and Cys356 are joined by a disulfide bond. Residue Asn349 is glycosylated (N-linked (GlcNAc...) asparagine). Residue His396 participates in Zn(2+) binding. 397–398 (SY) is a binding site for substrate. A disordered region spans residues 539-598 (QRPNKDDKPILNDDDDDDDADTNDDGIGRKDDSWIPDEYKGDNDRDESDGGWAFRRLRKR). Positions 550-562 (NDDDDDDDADTND) are enriched in acidic residues. The segment covering 564–581 (GIGRKDDSWIPDEYKGDN) has biased composition (basic and acidic residues).

The protein belongs to the peptidase M14 family. The cofactor is Zn(2+).

Its subcellular location is the vacuole. It is found in the secreted. Functionally, inactive carboxypeptidase that may play a role in cell wall organization and biogenesis. In Ajellomyces capsulatus (strain H143) (Darling's disease fungus), this protein is Inactive metallocarboxypeptidase ECM14 (ECM14).